Here is a 223-residue protein sequence, read N- to C-terminus: Sigma non-opioid intracellular receptor 1 (223 aa).

The Lumenal portion of the chain corresponds to 1–9 (MQWAAGRRW). Positions 2-8 (QWAAGRR) are targeting to endoplasmic reticulum-associated lipid droplets. A helical transmembrane segment spans residues 10–30 (AWITLFLTIVAVLIQAVWLWL). Residues 31–223 (GTQSFVFQRE…LTTYLFGQDS (193 aa)) are Cytoplasmic-facing. An important for ligand-binding region spans residues 99–106 (SLSEYVLL). The segment at 177-223 (VIPSTLAFALSDTIFSTQDFLTLFYTLRAYARGLRLELTTYLFGQDS) is C-terminal hydrophobic region.

It belongs to the ERG2 family. As to quaternary structure, homotrimer. Forms a ternary complex with ANK2 and ITPR3. The complex is disrupted by agonists. Interacts with KCNA4. Interacts with KCNA2; cocaine consumption leads to increased interaction. Interacts with RNF112 in an oxidative stress-regulated manner.

It is found in the nucleus inner membrane. The protein resides in the nucleus outer membrane. It localises to the nucleus envelope. Its subcellular location is the cytoplasmic vesicle. The protein localises to the endoplasmic reticulum membrane. It is found in the membrane. The protein resides in the lipid droplet. It localises to the cell junction. Its subcellular location is the cell membrane. The protein localises to the cell projection. It is found in the growth cone. The protein resides in the postsynaptic density membrane. Functionally, functions in lipid transport from the endoplasmic reticulum and is involved in a wide array of cellular functions probably through regulation of the biogenesis of lipid microdomains at the plasma membrane. Involved in the regulation of different receptors it plays a role in BDNF signaling and EGF signaling. Also regulates ion channels like the potassium channel and could modulate neurotransmitter release. Plays a role in calcium signaling through modulation together with ANK2 of the ITP3R-dependent calcium efflux at the endoplasmic reticulum. Plays a role in several other cell functions including proliferation, survival and death. Originally identified for its ability to bind various psychoactive drugs it is involved in learning processes, memory and mood alteration. Necessary for proper mitochondrial axonal transport in motor neurons, in particular the retrograde movement of mitochondria. Plays a role in protecting cells against oxidative stress-induced cell death via its interaction with RNF112. The protein is Sigma non-opioid intracellular receptor 1 (SIGMAR1) of Trichosurus vulpecula (Brush-tailed possum).